Reading from the N-terminus, the 136-residue chain is Ribonuclease VapC47 (136 aa).

The PINc domain occupies 2–104 (IYMDTSALTK…AIHLAAAAQI (103 aa)). Residues Asp5 and Asp94 each coordinate Mg(2+).

It belongs to the PINc/VapC protein family. Requires Mg(2+) as cofactor.

In terms of biological role, toxic component of a type II toxin-antitoxin (TA) system. An RNase. Its toxic effect on colony formation is neutralized by coexpression with cognate antitoxin VapB47. This Mycobacterium tuberculosis (strain CDC 1551 / Oshkosh) protein is Ribonuclease VapC47.